Reading from the N-terminus, the 244-residue chain is Protein A47 (244 aa).

The protein belongs to the orthopoxvirus A47 protein family.

In Homo sapiens (Human), this protein is Protein A47.